A 961-amino-acid polypeptide reads, in one-letter code: Retinoblastoma-related protein 1 (961 aa).

Residues 404–606 (TPVSTAMTTA…EKGSSMYNSL (203 aa)) form a domain A region. Positions 404–819 (TPVSTAMTTA…NEMFIPSVKP (416 aa)) are pocket. Positions 607–728 (AVAKPSLAAE…PGGGGETCAE (122 aa)) are spacer. The domain B stretch occupies residues 729-819 (TAINVFFGKI…NEMFIPSVKP (91 aa)). A disordered region spans residues 829 to 856 (NAEKNNHNDGQGPASPKPSPFPKLPDMS).

The protein belongs to the retinoblastoma protein (RB) family.

It is found in the nucleus. Regulator of biological processes that recruits a histone deacetylase to control gene transcription. May play a role in the entry into mitosis, negatively regulating the cell proliferation. Formation of stable complexes with geminiviridae replication-associated proteins may create a cellular environment which favors viral DNA replication. This is Retinoblastoma-related protein 1 (RB1) from Nicotiana tabacum (Common tobacco).